Consider the following 308-residue polypeptide: MTKTLVFGHKNPDTDTICSAISYAELKKAQGADIEAVRLGELNSETAFVLDYFQVTAPRLVQTVANEVSEVALVDHNERQQSVDDIDDVTVTAVVDHHRIANFETSDPLYYRAEPVGCTTTILLKMFRENEVEVSKTVAGLMLSAIISDTLLFQSPTCTEEDKVAAQKLAQIADVEIQSYGMEMLKAGADVSKKTVAELLLDAKEFNMNDNKVEIAQINVVDVNDVLSRRAEVEALMTQNIVDKGLDLYLFVITNILTNDSVGIAIGSKTAVVEEAYGVKFVENQAPLKGVVSRKKQVVPILTDTFAK.

The Mn(2+) site is built by His9, Asp13, Asp15, Asp75, His97, and Asp149.

Belongs to the PPase class C family. The cofactor is Mn(2+).

The protein localises to the cytoplasm. The catalysed reaction is diphosphate + H2O = 2 phosphate + H(+). In Listeria monocytogenes serotype 4a (strain HCC23), this protein is Probable manganese-dependent inorganic pyrophosphatase.